The chain runs to 440 residues: Serine/threonine-protein kinase 2 (440 aa).

Positions 85-440 (NDDFYHISTG…FSNWINGESC (356 aa)) constitute a Protein kinase domain. Residues 91–99 (ISTGGYGIV) and Lys-115 each bind ATP. The Proton acceptor role is filled by Asp-306.

Belongs to the protein kinase superfamily. Ser/Thr protein kinase family. Poxviruses subfamily. In terms of processing, phosphorylated in vivo. Autophosphorylated in vitro.

The protein localises to the host endoplasmic reticulum. The protein resides in the host endoplasmic reticulum-Golgi intermediate compartment. The catalysed reaction is L-seryl-[protein] + ATP = O-phospho-L-seryl-[protein] + ADP + H(+). It catalyses the reaction L-threonyl-[protein] + ATP = O-phospho-L-threonyl-[protein] + ADP + H(+). Essential serine-protein kinase involved in the early stage of virion morphogenesis. In Sus scrofa (Pig), this protein is Serine/threonine-protein kinase 2 (OPG054).